Here is a 228-residue protein sequence, read N- to C-terminus: 7-cyano-7-deazaguanine synthase (228 aa).

7–17 (LSGGMDSLVTT) lines the ATP pocket. Positions 187, 195, 198, and 201 each coordinate Zn(2+).

The protein belongs to the QueC family. The cofactor is Zn(2+).

The enzyme catalyses 7-carboxy-7-deazaguanine + NH4(+) + ATP = 7-cyano-7-deazaguanine + ADP + phosphate + H2O + H(+). Its pathway is purine metabolism; 7-cyano-7-deazaguanine biosynthesis. Its function is as follows. Catalyzes the ATP-dependent conversion of 7-carboxy-7-deazaguanine (CDG) to 7-cyano-7-deazaguanine (preQ(0)). The chain is 7-cyano-7-deazaguanine synthase from Chlorobium chlorochromatii (strain CaD3).